Consider the following 378-residue polypeptide: Chaperone protein DnaJ (378 aa).

The J domain maps to 5-70; the sequence is DFYEILGVSK…EKRSAYDRMG (66 aa). The CR-type zinc finger occupies 137–215; that stretch reads GCKKEISFTA…CHGNGVKDKS (79 aa). Zn(2+)-binding residues include Cys-150, Cys-153, Cys-167, Cys-170, Cys-189, Cys-192, Cys-203, and Cys-206. 4 CXXCXGXG motif repeats span residues 150 to 157, 167 to 174, 189 to 196, and 203 to 210; these read CDTCDGKG, CQTCHGQG, CPHCGGTG, and CSDCHGNG.

The protein belongs to the DnaJ family. In terms of assembly, homodimer. Requires Zn(2+) as cofactor.

It is found in the cytoplasm. Functionally, participates actively in the response to hyperosmotic and heat shock by preventing the aggregation of stress-denatured proteins and by disaggregating proteins, also in an autonomous, DnaK-independent fashion. Unfolded proteins bind initially to DnaJ; upon interaction with the DnaJ-bound protein, DnaK hydrolyzes its bound ATP, resulting in the formation of a stable complex. GrpE releases ADP from DnaK; ATP binding to DnaK triggers the release of the substrate protein, thus completing the reaction cycle. Several rounds of ATP-dependent interactions between DnaJ, DnaK and GrpE are required for fully efficient folding. Also involved, together with DnaK and GrpE, in the DNA replication of plasmids through activation of initiation proteins. The polypeptide is Chaperone protein DnaJ (Psychrobacter cryohalolentis (strain ATCC BAA-1226 / DSM 17306 / VKM B-2378 / K5)).